The sequence spans 261 residues: Enolase-phosphatase E1 (261 aa).

Mg(2+) contacts are provided by aspartate 16 and glutamate 18. Residues 153 to 154 (SS) and lysine 187 each bind substrate. Aspartate 212 provides a ligand contact to Mg(2+).

This sequence belongs to the HAD-like hydrolase superfamily. MasA/MtnC family. In terms of assembly, monomer. Mg(2+) serves as cofactor.

It is found in the cytoplasm. The protein localises to the nucleus. The catalysed reaction is 5-methylsulfanyl-2,3-dioxopentyl phosphate + H2O = 1,2-dihydroxy-5-(methylsulfanyl)pent-1-en-3-one + phosphate. It functions in the pathway amino-acid biosynthesis; L-methionine biosynthesis via salvage pathway; L-methionine from S-methyl-5-thio-alpha-D-ribose 1-phosphate: step 3/6. It participates in amino-acid biosynthesis; L-methionine biosynthesis via salvage pathway; L-methionine from S-methyl-5-thio-alpha-D-ribose 1-phosphate: step 4/6. Functionally, bifunctional enzyme that catalyzes the enolization of 2,3-diketo-5-methylthiopentyl-1-phosphate (DK-MTP-1-P) into the intermediate 2-hydroxy-3-keto-5-methylthiopentenyl-1-phosphate (HK-MTPenyl-1-P), which is then dephosphorylated to form the acireductone 1,2-dihydroxy-3-keto-5-methylthiopentene (DHK-MTPene). The polypeptide is Enolase-phosphatase E1 (Homo sapiens (Human)).